The following is a 207-amino-acid chain: Ribosome maturation factor RimM (207 aa).

In terms of domain architecture, PRC barrel spans 114–207; that stretch reads DDEYYWVDLI…RIDSDWPLDY (94 aa).

It belongs to the RimM family. Binds ribosomal protein uS19.

The protein resides in the cytoplasm. An accessory protein needed during the final step in the assembly of 30S ribosomal subunit, possibly for assembly of the head region. Essential for efficient processing of 16S rRNA. May be needed both before and after RbfA during the maturation of 16S rRNA. It has affinity for free ribosomal 30S subunits but not for 70S ribosomes. In Bordetella bronchiseptica (strain ATCC BAA-588 / NCTC 13252 / RB50) (Alcaligenes bronchisepticus), this protein is Ribosome maturation factor RimM.